Reading from the N-terminus, the 218-residue chain is MEPGFWHEKWHQQQIGFHQQDINPFLVKYWQQLGLPADTQVFVPLCGKSLDMCFLAEQGHQVIGCELNELAVQQFFSDNQLEMTQTTVGEHQHYQTEQISLYQGDIFTLPNAITQEVTAFYDRAALIAWPESMRAQYAKQLASLLPSGSVGLLVTLDYPQEALIGPPFAVSPTWVEQHLSDDFDIEVLASQDVLADNPRFIKKAVPWLNEAAYLLKRK.

S-adenosyl-L-methionine is bound by residues tryptophan 10, leucine 45, glutamate 66, and arginine 123.

The protein belongs to the class I-like SAM-binding methyltransferase superfamily. TPMT family.

The protein resides in the cytoplasm. It carries out the reaction S-adenosyl-L-methionine + a thiopurine = S-adenosyl-L-homocysteine + a thiopurine S-methylether.. In Shewanella baltica (strain OS155 / ATCC BAA-1091), this protein is Thiopurine S-methyltransferase.